Consider the following 1470-residue polypeptide: Rap guanine nucleotide exchange factor (1470 aa).

Disordered stretches follow at residues 130–227 (PTEP…SYND) and 250–313 (HRRE…GGFM). The segment covering 173-183 (MPPPPVPPRPL) has biased composition (pro residues). Composition is skewed to low complexity over residues 184 to 193 (RLPQTAAKGP) and 215 to 224 (TTSSSSSNTS). A compositionally biased stretch (polar residues) spans 256-266 (NSVGGQAQNGI). Over residues 275-292 (RSTASSTTTEGETASNEG) the composition is skewed to low complexity. Residue 347–463 (AFAALPMSIK…IEKDRDGLTG (117 aa)) coordinates a nucleoside 3',5'-cyclic phosphate. One can recognise an N-terminal Ras-GEF domain in the interval 478 to 592 (CGQVLIKGKP…SLLNIACSVK (115 aa)). In terms of domain architecture, PDZ spans 597–679 (QVILTRRKDD…LTLMLKNNVL (83 aa)). In terms of domain architecture, Ras-associating spans 782–869 (PEHVLKIYRN…SRYYLKNNSR (88 aa)). A Ras-GEF domain is found at 894 to 1124 (NAQVVAAQLT…FENSNVATMR (231 aa)). Polar residues predominate over residues 1176–1189 (QTAHRGANSSSTAN). Disordered stretches follow at residues 1176–1213 (QTAH…DQSS), 1253–1326 (KVKG…NIPP), 1347–1370 (VIPT…PASS), and 1422–1455 (ATLP…RMGT). Low complexity predominate over residues 1198–1211 (PSSLSSQSAGSADQ). Composition is skewed to polar residues over residues 1260-1274 (QITS…SLQR) and 1282-1308 (RQAT…YQSD). Basic and acidic residues predominate over residues 1309-1321 (NGRRQRSGSEGRF). Low complexity predominate over residues 1349 to 1370 (PTHPHGHSPTSPRCRSRSPASS).

Belongs to the RAPGEF2 family. In terms of tissue distribution, expressed in hermaphrodite-specific neurons (HSNs), oviduct sheath cells and lateral seam cells.

Functionally, acts as a guanine nucleotide exchange factor for small G protein GTPases like rap-1 and rap-2. Required in the hypodermis, especially in the seam cells, for proper formation of the cuticle. The sequence is that of Rap guanine nucleotide exchange factor (pxf-1) from Caenorhabditis elegans.